Reading from the N-terminus, the 201-residue chain is MEKFTKLTGVAAPMPVVNIDTDMIIPKDYLKTIKRTGLGKGLFAESRYLEDGSPNPDFVLNKPAYQNAQILVAGDNFGCGSSREHAPWALLDFGIRCVISTSFADIFYNNCFKNGILPVVVSPENLEKLLDDASRGSNAVLSIDLERQEISGPDGGTITFEIDEFKRHCMLNGLDDIGLTLEHAGAIDTFEKANASVRPWA.

The protein belongs to the LeuD family. LeuD type 1 subfamily. Heterodimer of LeuC and LeuD.

It carries out the reaction (2R,3S)-3-isopropylmalate = (2S)-2-isopropylmalate. It participates in amino-acid biosynthesis; L-leucine biosynthesis; L-leucine from 3-methyl-2-oxobutanoate: step 2/4. Its function is as follows. Catalyzes the isomerization between 2-isopropylmalate and 3-isopropylmalate, via the formation of 2-isopropylmaleate. This chain is 3-isopropylmalate dehydratase small subunit, found in Agrobacterium fabrum (strain C58 / ATCC 33970) (Agrobacterium tumefaciens (strain C58)).